Here is a 386-residue protein sequence, read N- to C-terminus: Phosphomevalonate dehydratase large subunit (386 aa).

(R)-5-phosphomevalonate-binding residues include Gly-48, Val-49, Ser-50, Asn-53, Arg-63, Asn-79, and Pro-80. Cys-110 provides a ligand contact to [4Fe-4S] cluster. Residues Glu-129 and Ser-130 each contribute to the (R)-5-phosphomevalonate site. Positions 283 and 342 each coordinate [4Fe-4S] cluster. Lys-361 contributes to the (R)-5-phosphomevalonate binding site.

Belongs to the AcnX type II large subunit family. As to quaternary structure, heterodimer composed of a large subunit (PMDh-L) and a small subunit (PMDh-S). [4Fe-4S] cluster is required as a cofactor.

The catalysed reaction is (R)-5-phosphomevalonate = (2E)-3-methyl-5-phosphooxypent-2-enoate + H2O. The protein operates within isoprenoid biosynthesis; isopentenyl diphosphate biosynthesis via mevalonate pathway. Functionally, component of a hydro-lyase that catalyzes the dehydration of mevalonate 5-phosphate (MVA5P) to form trans-anhydromevalonate 5-phosphate (tAHMP). Involved in the archaeal mevalonate (MVA) pathway, which provides fundamental precursors for isoprenoid biosynthesis, such as isopentenyl diphosphate (IPP) and dimethylallyl diphosphate (DMAPP). This chain is Phosphomevalonate dehydratase large subunit, found in Thermococcus kodakarensis (strain ATCC BAA-918 / JCM 12380 / KOD1) (Pyrococcus kodakaraensis (strain KOD1)).